Consider the following 323-residue polypeptide: MIVVTGGAGFIGSNIVKALNAQGRTDILVVDNLKNGKKFINIADCDIADYLDKEDFQSRIFAEEGLPDIDCVFHEGACSATTEWDGKYMMDNNYEYSKDLLNYCLNRKIPFLYASSAAVYGDGPTFIEERQYEKPLNVYGYSKFQFDQYVRRILPLAESQVAGFRYFNVYGPREQHKGDMASVAFKLHNQVLAGEKLKLFGAYDGYEAGMQTRDFVFIEDVVNVNLWFMENPEQSGIFNLGPAAAEPFKHIADAVIDFHGQGEIEYIPFPDRLKGAYQSFTQADNTRLRDAGYDKPFHTVSEGVQKYLRWLSDNPRVLDFTKK.

Residues 10-11 (FI), 31-32 (DN), K38, K53, 75-79 (EGACS), and N92 each bind NADP(+). The Proton acceptor role is filled by Y139. Residue K143 participates in NADP(+) binding. N168 contributes to the substrate binding site. Residues V169 and K177 each coordinate NADP(+). The active-site Proton acceptor is K177. Substrate is bound by residues D179, K186, 200–203 (FGAY), R213, and Y277.

This sequence belongs to the NAD(P)-dependent epimerase/dehydratase family. HldD subfamily. In terms of assembly, homopentamer. Requires NADP(+) as cofactor.

The enzyme catalyses ADP-D-glycero-beta-D-manno-heptose = ADP-L-glycero-beta-D-manno-heptose. It participates in nucleotide-sugar biosynthesis; ADP-L-glycero-beta-D-manno-heptose biosynthesis; ADP-L-glycero-beta-D-manno-heptose from D-glycero-beta-D-manno-heptose 7-phosphate: step 4/4. Catalyzes the interconversion between ADP-D-glycero-beta-D-manno-heptose and ADP-L-glycero-beta-D-manno-heptose via an epimerization at carbon 6 of the heptose. The polypeptide is ADP-L-glycero-D-manno-heptose-6-epimerase (Hydrogenovibrio crunogenus (strain DSM 25203 / XCL-2) (Thiomicrospira crunogena)).